Consider the following 78-residue polypeptide: MPTKAGTKSTANKKTTKGSSKSGSPRGHTGKTHAPPSMHSGMLYKDMVNIARSKGIPIYQNGTRLTKSELEKKIRRSK.

Positions 1 to 24 (MPTKAGTKSTANKKTTKGSSKSGS) are enriched in low complexity. Residues 1–41 (MPTKAGTKSTANKKTTKGSSKSGSPRGHTGKTHAPPSMHSG) form a disordered region.

This sequence belongs to the asfivirus P10 family.

It localises to the virion. Its function is as follows. May play a role in genome packaging through direct interaction with viral DNA. Binds to ssDNA and dsDNA with the same apparent affinity in vitro. This chain is Structural DNA-binding protein p10, found in African swine fever virus (isolate Tick/South Africa/Pretoriuskop Pr4/1996) (ASFV).